Consider the following 349-residue polypeptide: Isopentenyl-diphosphate delta-isomerase (349 aa).

A substrate-binding site is contributed by 12 to 13; the sequence is RK. FMN contacts are provided by residues Ser69, 70–72, Ser101, and Asn129; that span reads SMT. A substrate-binding site is contributed by 101 to 103; sequence SQR. Gln164 lines the substrate pocket. Residue Glu165 coordinates Mg(2+). Residues Lys196, Thr226, 279 to 281, and 300 to 301 each bind FMN; these read GIR and AA.

Belongs to the IPP isomerase type 2 family. In terms of assembly, homooctamer. Dimer of tetramers. FMN serves as cofactor. NADPH is required as a cofactor. It depends on Mg(2+) as a cofactor.

The protein localises to the cytoplasm. It carries out the reaction isopentenyl diphosphate = dimethylallyl diphosphate. Involved in the biosynthesis of isoprenoids. Catalyzes the 1,3-allylic rearrangement of the homoallylic substrate isopentenyl (IPP) to its allylic isomer, dimethylallyl diphosphate (DMAPP). The chain is Isopentenyl-diphosphate delta-isomerase from Paracoccus zeaxanthinifaciens.